The following is a 404-amino-acid chain: Acetylornithine aminotransferase (404 aa).

Residues 113-114 and Phe-139 contribute to the pyridoxal 5'-phosphate site; that span reads GT. Arg-142 is a binding site for N(2)-acetyl-L-ornithine. Position 224 to 227 (224 to 227) interacts with pyridoxal 5'-phosphate; the sequence is DEVQ. Lys-253 carries the N6-(pyridoxal phosphate)lysine modification. Ser-281 contributes to the N(2)-acetyl-L-ornithine binding site. Residue Thr-282 participates in pyridoxal 5'-phosphate binding.

This sequence belongs to the class-III pyridoxal-phosphate-dependent aminotransferase family. ArgD subfamily. Homodimer. It depends on pyridoxal 5'-phosphate as a cofactor.

It localises to the cytoplasm. The enzyme catalyses N(2)-acetyl-L-ornithine + 2-oxoglutarate = N-acetyl-L-glutamate 5-semialdehyde + L-glutamate. The protein operates within amino-acid biosynthesis; L-arginine biosynthesis; N(2)-acetyl-L-ornithine from L-glutamate: step 4/4. The polypeptide is Acetylornithine aminotransferase (Mycobacterium leprae (strain TN)).